Consider the following 509-residue polypeptide: Heat shock 70 kDa protein 14-A (509 aa).

Belongs to the heat shock protein 70 family. In terms of assembly, component of ribosome-associated complex (RAC).

The protein localises to the cytoplasm. It is found in the cytosol. Its function is as follows. Component of the ribosome-associated complex (RAC), a complex involved in folding or maintaining nascent polypeptides in a folding-competent state. The protein is Heat shock 70 kDa protein 14-A (hspa14-a) of Xenopus laevis (African clawed frog).